We begin with the raw amino-acid sequence, 90 residues long: UPF0298 protein YlbG (90 aa).

This sequence belongs to the UPF0298 family.

The protein resides in the cytoplasm. The sequence is that of UPF0298 protein YlbG (ylbG) from Bacillus subtilis (strain 168).